The sequence spans 278 residues: 4-deoxy-L-threo-5-hexosulose-uronate ketol-isomerase (278 aa).

4 residues coordinate Zn(2+): His-196, His-198, Glu-203, and His-245.

The protein belongs to the KduI family. Zn(2+) serves as cofactor.

It catalyses the reaction 5-dehydro-4-deoxy-D-glucuronate = 3-deoxy-D-glycero-2,5-hexodiulosonate. It participates in glycan metabolism; pectin degradation; 2-dehydro-3-deoxy-D-gluconate from pectin: step 4/5. In terms of biological role, catalyzes the isomerization of 5-dehydro-4-deoxy-D-glucuronate to 3-deoxy-D-glycero-2,5-hexodiulosonate. This Salmonella typhimurium (strain LT2 / SGSC1412 / ATCC 700720) protein is 4-deoxy-L-threo-5-hexosulose-uronate ketol-isomerase.